Reading from the N-terminus, the 91-residue chain is Potassium channel toxin AaTXK-beta (91 aa).

The N-terminal stretch at 1-19 (MQRNLVVLLFLGMVALSSC) is a signal peptide. Residues 20–27 (GLREKHVQ) constitute a propeptide that is removed on maturation. Residues 54–91 (QFGCPAYQGYCDDHCQDIKKEEGFCHGFKCKCGIPMGF) form the BetaSPN-type CS-alpha/beta domain. Intrachain disulfides connect C57/C78, C64/C83, and C68/C85.

Belongs to the long chain scorpion toxin family. Class 1 subfamily. Monomer (both chains). In terms of tissue distribution, expressed by the venom gland.

It is found in the secreted. Inhibits voltage-gated potassium channels (Kv). Does not activate Kv7 channels. Functionally, peptide activator of Kv7.4/KCNQ4 channels. Also acts as a subtype-selective activator of channels formed by Kv7.3/KCNQ3, Kv7.2/Kv7.3 (KCNQ2/KCNQ3), Kv7.5/Kv7.3 (KCNQ3/KCNQ5) subunits. In Androctonus australis (Sahara scorpion), this protein is Potassium channel toxin AaTXK-beta.